The following is a 201-amino-acid chain: 3-isopropylmalate dehydratase small subunit (201 aa).

This sequence belongs to the LeuD family. LeuD type 1 subfamily. As to quaternary structure, heterodimer of LeuC and LeuD.

The catalysed reaction is (2R,3S)-3-isopropylmalate = (2S)-2-isopropylmalate. It functions in the pathway amino-acid biosynthesis; L-leucine biosynthesis; L-leucine from 3-methyl-2-oxobutanoate: step 2/4. In terms of biological role, catalyzes the isomerization between 2-isopropylmalate and 3-isopropylmalate, via the formation of 2-isopropylmaleate. The protein is 3-isopropylmalate dehydratase small subunit of Mesorhizobium japonicum (strain LMG 29417 / CECT 9101 / MAFF 303099) (Mesorhizobium loti (strain MAFF 303099)).